The primary structure comprises 275 residues: Urease accessory protein UreD (275 aa).

The protein belongs to the UreD family. As to quaternary structure, ureD, UreF and UreG form a complex that acts as a GTP-hydrolysis-dependent molecular chaperone, activating the urease apoprotein by helping to assemble the nickel containing metallocenter of UreC. The UreE protein probably delivers the nickel.

Its subcellular location is the cytoplasm. Its function is as follows. Required for maturation of urease via the functional incorporation of the urease nickel metallocenter. This Cereibacter sphaeroides (strain ATCC 17029 / ATH 2.4.9) (Rhodobacter sphaeroides) protein is Urease accessory protein UreD.